A 419-amino-acid chain; its full sequence is uncharacterized protein (419 aa).

In terms of domain architecture, Obg spans 29–236 (PKFQDKIRIR…KLIELELKTI (208 aa)). Residues 237–414 (CEIGLVGLPN…LVRGMTQLLQ (178 aa)) enclose the OBG-type G domain. Residues 243-250 (GLPNAGKS), 295-299 (DIPGI), and 364-367 (ANKA) contribute to the GTP site.

It belongs to the TRAFAC class OBG-HflX-like GTPase superfamily. OBG GTPase family.

The protein resides in the mitochondrion. This is an uncharacterized protein from Schizosaccharomyces pombe (strain 972 / ATCC 24843) (Fission yeast).